Reading from the N-terminus, the 396-residue chain is Pinosylvin synthase 1 (396 aa).

Substrate is bound at residue 60 to 63 (KFKR). Cys-170 is an active-site residue. Residues Leu-273 and 311–313 (GGH) each bind substrate.

The protein belongs to the thiolase-like superfamily. Chalcone/stilbene synthases family. In terms of assembly, homodimer.

It is found in the cytoplasm. It catalyses the reaction (E)-cinnamoyl-CoA + 3 malonyl-CoA + 3 H(+) = (E)-pinosylvin + 4 CO2 + 4 CoA. The catalysed reaction is 3-phenylpropanoyl-CoA + 3 malonyl-CoA + 3 H(+) = dihydropinosylvin + 4 CO2 + 4 CoA. It participates in phytoalexin biosynthesis; pinosylvin biosynthesis. Its function is as follows. Catalyzes the production of pinosylvin from cinnamoyl-CoA and malonyl-CoA, and dihydropinosylvin from dihydrocinnamoyl-CoA. The chain is Pinosylvin synthase 1 from Pinus strobus (Eastern white pine).